Here is a 501-residue protein sequence, read N- to C-terminus: Endonuclease domain-containing 1 protein (501 aa).

Positions 1–21 are cleaved as a signal peptide; the sequence is MGCARWLALGGLLALAGLLQA. Position 408 is an N6-acetyllysine (lysine 408).

It belongs to the DNA/RNA non-specific endonuclease family. In terms of assembly, interacts with RNF26; this interaction is important to modulate innate immune signaling through the cGAS-STING pathway.

It is found in the secreted. May act as a DNase and a RNase. Plays a role in the modulation of innate immune signaling through the cGAS-STING pathway by interacting with RNF26. The chain is Endonuclease domain-containing 1 protein (Endod1) from Mus musculus (Mouse).